Here is a 77-residue protein sequence, read N- to C-terminus: Acyl carrier protein (77 aa).

The Carrier domain occupies 2–77; the sequence is SNIEERVKKI…AAIDYVTANQ (76 aa). Ser-37 is subject to O-(pantetheine 4'-phosphoryl)serine.

It belongs to the acyl carrier protein (ACP) family. In terms of processing, 4'-phosphopantetheine is transferred from CoA to a specific serine of apo-ACP by AcpS. This modification is essential for activity because fatty acids are bound in thioester linkage to the sulfhydryl of the prosthetic group.

Its subcellular location is the cytoplasm. It functions in the pathway lipid metabolism; fatty acid biosynthesis. Its function is as follows. Carrier of the growing fatty acid chain in fatty acid biosynthesis. The protein is Acyl carrier protein of Colwellia psychrerythraea (strain 34H / ATCC BAA-681) (Vibrio psychroerythus).